Consider the following 516-residue polypeptide: MTRLALLSVSDKTGIIDLAQQLIHQFDFELISSGGTAKALQAAGLPVTKVSEYTGSPEILGGRVKTLHPRIHGGILGRRDLPQDTQDMETHQIHPIDLVVVNLYPFEQTIANPNVTVAEAIENIDIGGPTLLRAAAKNYAHVTVLSNPKYYDTYLQELAENNGEVSLEFRQKMAGETFALTNSYDGAIANYFMTLSSENESTLPSRFTVSGTQFQSLRYGENPHQQAAWYQTGTQPSGWAAATQLQGKELSYNNLVDLEAARRIIAEFNPQEPAVAILKHTNPCGVAVGNTLADAYEKAFNADSISAFGGIIALNQPLDKETASLLTKTFLECVVAPGCDDEAKEILTAKSKVRVLVLPDLMNGPKQTIKVIAGGLLVQASDDVIDTPDSWKIVTEKQPTLQQLAELLFAWKVAKHVKSNAIVVTKNRTTLGIGAGQMNRVGSVKIALEQAGEAAMGGCLASDGFFPFDDSVRTAAAAGIKVIVQPGGSVKDKDSIAAANELGLVMMLTGIRHFLH.

Residues 1–146 (MTRLALLSVS…KNYAHVTVLS (146 aa)) enclose the MGS-like domain.

It belongs to the PurH family.

It carries out the reaction (6R)-10-formyltetrahydrofolate + 5-amino-1-(5-phospho-beta-D-ribosyl)imidazole-4-carboxamide = 5-formamido-1-(5-phospho-D-ribosyl)imidazole-4-carboxamide + (6S)-5,6,7,8-tetrahydrofolate. It catalyses the reaction IMP + H2O = 5-formamido-1-(5-phospho-D-ribosyl)imidazole-4-carboxamide. Its pathway is purine metabolism; IMP biosynthesis via de novo pathway; 5-formamido-1-(5-phospho-D-ribosyl)imidazole-4-carboxamide from 5-amino-1-(5-phospho-D-ribosyl)imidazole-4-carboxamide (10-formyl THF route): step 1/1. It participates in purine metabolism; IMP biosynthesis via de novo pathway; IMP from 5-formamido-1-(5-phospho-D-ribosyl)imidazole-4-carboxamide: step 1/1. The protein is Bifunctional purine biosynthesis protein PurH of Rippkaea orientalis (strain PCC 8801 / RF-1) (Cyanothece sp. (strain PCC 8801)).